The following is a 527-amino-acid chain: Palmitoleoyl-protein carboxylesterase NOTUM (527 aa).

Residues 1-19 form the signal peptide; sequence MKSYLILNTLLLSLLKING. 3 N-linked (GlcNAc...) asparagine glycosylation sites follow: Asn-64, Asn-86, and Asn-104. Ser-203 acts as the Charge relay system in catalysis. Asn-249 is a glycosylation site (N-linked (GlcNAc...) asparagine). Catalysis depends on charge relay system residues Asp-311 and His-359. N-linked (GlcNAc...) asparagine glycosylation occurs at Asn-451.

The protein belongs to the pectinacetylesterase family. Notum subfamily. As to expression, expressed in the anterior pole.

Its subcellular location is the secreted. It carries out the reaction [Wnt protein]-O-(9Z)-hexadecenoyl-L-serine + H2O = [Wnt protein]-L-serine + (9Z)-hexadecenoate + H(+). In terms of biological role, carboxylesterase that acts as a key negative regulator of the Wnt signaling pathway. Acts by specifically mediating depalmitoleoylation of WNT proteins. Serine palmitoleoylation of WNT proteins is required for efficient binding to frizzled receptors. Promotes head regeneration following amputation by inhibiting the Wnt signaling pathway. This chain is Palmitoleoyl-protein carboxylesterase NOTUM, found in Schmidtea mediterranea (Freshwater planarian flatworm).